Here is a 205-residue protein sequence, read N- to C-terminus: Large ribosomal subunit protein uL4 (205 aa).

Belongs to the universal ribosomal protein uL4 family. As to quaternary structure, part of the 50S ribosomal subunit.

Its function is as follows. One of the primary rRNA binding proteins, this protein initially binds near the 5'-end of the 23S rRNA. It is important during the early stages of 50S assembly. It makes multiple contacts with different domains of the 23S rRNA in the assembled 50S subunit and ribosome. Forms part of the polypeptide exit tunnel. The chain is Large ribosomal subunit protein uL4 from Roseobacter denitrificans (strain ATCC 33942 / OCh 114) (Erythrobacter sp. (strain OCh 114)).